We begin with the raw amino-acid sequence, 77 residues long: MTRLTVVFLAILVLLPLATSNSGADEAPASLSDLLHRTKRCAGGNQCTTDAECCGNYQCRCSLASNCSGSNPKKRCT.

The first 21 residues, 1-21 (MTRLTVVFLAILVLLPLATSN), serve as a signal peptide directing secretion. Residues 22-40 (SGADEAPASLSDLLHRTKR) constitute a propeptide that is removed on maturation.

In terms of processing, contains 4 disulfide bonds. Expressed by the venom duct.

The protein localises to the secreted. The polypeptide is Teretoxin Tan15.2 (Terebra anilis (Auger snail)).